The sequence spans 120 residues: Anti-adapter protein IraM (120 aa).

This sequence belongs to the IraM/RssC family.

It localises to the cytoplasm. Involved in the stabilization of the sigma stress factor RpoS. The protein is Anti-adapter protein IraM of Salmonella typhimurium (strain LT2 / SGSC1412 / ATCC 700720).